Consider the following 217-residue polypeptide: 3,4-dihydroxy-2-butanone 4-phosphate synthase (217 aa).

Residues 37–38 (RE), Asp-42, 150–154 (RRGHT), and Glu-174 contribute to the D-ribulose 5-phosphate site. Glu-38 serves as a coordination point for Mg(2+). His-153 contributes to the Mg(2+) binding site.

Belongs to the DHBP synthase family. As to quaternary structure, homodimer. Mg(2+) is required as a cofactor. The cofactor is Mn(2+).

The enzyme catalyses D-ribulose 5-phosphate = (2S)-2-hydroxy-3-oxobutyl phosphate + formate + H(+). It functions in the pathway cofactor biosynthesis; riboflavin biosynthesis; 2-hydroxy-3-oxobutyl phosphate from D-ribulose 5-phosphate: step 1/1. Its function is as follows. Catalyzes the conversion of D-ribulose 5-phosphate to formate and 3,4-dihydroxy-2-butanone 4-phosphate. This Tolumonas auensis (strain DSM 9187 / NBRC 110442 / TA 4) protein is 3,4-dihydroxy-2-butanone 4-phosphate synthase.